The sequence spans 135 residues: Large ribosomal subunit protein bL21 (135 aa).

The segment at Glu114 to Glu135 is disordered. Over residues Thr125 to Glu135 the composition is skewed to acidic residues.

The protein belongs to the bacterial ribosomal protein bL21 family. Part of the 50S ribosomal subunit. Contacts protein L20.

Functionally, this protein binds to 23S rRNA in the presence of protein L20. The protein is Large ribosomal subunit protein bL21 of Nostoc punctiforme (strain ATCC 29133 / PCC 73102).